Consider the following 193-residue polypeptide: Ion-translocating oxidoreductase complex subunit A (193 aa).

A run of 6 helical transmembrane segments spans residues 5–25, 47–67, 72–92, 102–122, 134–154, and 167–187; these read ILFFISNILIENFILVKFLGL, FVILTSSVLLWCVNFFILLPL, LRIIAYMLIVSVSVQFLEIVL, LLGIFLPLITTNCTVLAIPLF, IFYGLSASLGFALVMIIFSCI, and FQGAPIILITVSLISITFMGF.

This sequence belongs to the NqrDE/RnfAE family. In terms of assembly, the complex is composed of six subunits: RnfA, RnfB, RnfC, RnfD, RnfE and RnfG.

The protein resides in the cell inner membrane. Functionally, part of a membrane-bound complex that couples electron transfer with translocation of ions across the membrane. This chain is Ion-translocating oxidoreductase complex subunit A, found in Buchnera aphidicola subsp. Acyrthosiphon pisum (strain APS) (Acyrthosiphon pisum symbiotic bacterium).